Here is a 457-residue protein sequence, read N- to C-terminus: MALWGGRFTQAADKRFKDFNDSLRFDYRLAEQDIQGSIGWSKALVKVNVLTVEEQHQLEQALNELLVEVRSNPQAILQDDAEDIHSWVESKLIDKVGNLGKKLHTGRSRNDQVAVDIKLWCKQRVVELQESVRNLQRHLVQTAENTQQAVMPGYTHLQRAQPITFAHWCMAYVEMFDRDYSRLTDAYNRMNTCPLGSGALAGTAYAVDRDSLAHDLSFAFATRNSLDSVSDRDHIVELLSIASLSMAHLSRFAEDMIIFNSGEANFVELSDRVTSGSSLMPQKKNPDACELIRGKTGRVIGSLTSMLITLKGLPLAYNKDMQEDKEGIFDALDTWQNCVDMATFVLDELKVNVERTREAALKGYSNATELADYLVSKGVPFRDSHHIVGETVVYAIEKGKGLEDLTIPEFRQFSEVVGDDVYEILSLQSCLDKRCAKGGVSPLRVAEAIAEAKTRFA.

This sequence belongs to the lyase 1 family. Argininosuccinate lyase subfamily.

It is found in the cytoplasm. It carries out the reaction 2-(N(omega)-L-arginino)succinate = fumarate + L-arginine. The protein operates within amino-acid biosynthesis; L-arginine biosynthesis; L-arginine from L-ornithine and carbamoyl phosphate: step 3/3. This is Argininosuccinate lyase from Haemophilus influenzae (strain 86-028NP).